The following is an 86-amino-acid chain: Sugar transporter SemiSWEET (86 aa).

A run of 3 helical transmembrane segments spans residues 3 to 23, 37 to 57, and 61 to 81; these read PFLI…AYAP, ISLG…IYGL, and DAPL…ILVM. One can recognise a PQ-loop domain in the interval 6–63; the sequence is IKLIGFAAATCTTVAYAPQFIKVLKTRSARDISLGMFLVMVLGLALWLIYGLLSGDAP.

Homodimer. Homooligomer.

It is found in the cell membrane. In terms of biological role, mediates sucrose transmembrane transport down a concentration gradient. This is Sugar transporter SemiSWEET from Bradyrhizobium diazoefficiens (strain JCM 10833 / BCRC 13528 / IAM 13628 / NBRC 14792 / USDA 110).